A 330-amino-acid polypeptide reads, in one-letter code: GTPase Obg (330 aa).

The Obg domain occupies 1–159 (MNFIDEVKIY…MWIHLSLKLL (159 aa)). An OBG-type G domain is found at 160–327 (SDVGLVGLPN…IVKLALKIIK (168 aa)). GTP is bound by residues 166–173 (GLPNAGKS), 191–195 (FTTLV), 212–215 (DIPG), 279–282 (NKCD), and 308–310 (STY). Positions 173 and 193 each coordinate Mg(2+).

The protein belongs to the TRAFAC class OBG-HflX-like GTPase superfamily. OBG GTPase family. As to quaternary structure, monomer. It depends on Mg(2+) as a cofactor.

It localises to the cytoplasm. In terms of biological role, an essential GTPase which binds GTP, GDP and possibly (p)ppGpp with moderate affinity, with high nucleotide exchange rates and a fairly low GTP hydrolysis rate. Plays a role in control of the cell cycle, stress response, ribosome biogenesis and in those bacteria that undergo differentiation, in morphogenesis control. The chain is GTPase Obg from Rickettsia akari (strain Hartford).